The sequence spans 132 residues: Small ribosomal subunit protein eS12 (132 aa).

Position 2 is an N-acetylalanine (Ala-2). Lys-129 is subject to N6-succinyllysine.

Belongs to the eukaryotic ribosomal protein eS12 family. In terms of assembly, part of the small subunit (SSU) processome, composed of more than 70 proteins and the RNA chaperone small nucleolar RNA (snoRNA) U3. Subunit of the 40S ribosomal complex.

The protein resides in the nucleus. It is found in the nucleolus. In terms of biological role, part of the small subunit (SSU) processome, first precursor of the small eukaryotic ribosomal subunit. During the assembly of the SSU processome in the nucleolus, many ribosome biogenesis factors, an RNA chaperone and ribosomal proteins associate with the nascent pre-rRNA and work in concert to generate RNA folding, modifications, rearrangements and cleavage as well as targeted degradation of pre-ribosomal RNA by the RNA exosome. Subunit of the 40S ribosomal complex. The chain is Small ribosomal subunit protein eS12 (Rps12) from Mus musculus (Mouse).